Consider the following 733-residue polypeptide: Fibronectin type III domain-containing protein 7 (733 aa).

Residues 1–25 (MAGGRETCLPLIGFILICLKMVASA) form the signal peptide. Fibronectin type-III domains are found at residues 28-115 (APEI…TVLA), 116-202 (APIL…TSPR), 203-288 (APAN…TVAC), 289-373 (APGR…TAPC), 374-459 (CPSD…TAPC), 460-544 (SPEI…TVPC), 545-632 (CPTG…CCPL), and 631-715 (PLGV…YSVT). N-linked (GlcNAc...) asparagine glycosylation occurs at Asn-230. Asn-433 carries an N-linked (GlcNAc...) asparagine glycan.

Its subcellular location is the secreted. The sequence is that of Fibronectin type III domain-containing protein 7 (FNDC7) from Homo sapiens (Human).